The primary structure comprises 192 residues: Thymidine kinase (192 aa).

ATP contacts are provided by residues 9-16 (STMNAGKS) and 87-90 (DEAQ). The active-site Proton acceptor is Glu-88. The Zn(2+) site is built by Cys-145, Cys-147, Cys-182, and His-185.

It belongs to the thymidine kinase family. As to quaternary structure, homotetramer.

It is found in the cytoplasm. It catalyses the reaction thymidine + ATP = dTMP + ADP + H(+). The polypeptide is Thymidine kinase (Pasteurella multocida (strain Pm70)).